The primary structure comprises 425 residues: Probable mitochondrial import inner membrane translocase subunit tin-44 (425 aa).

The stretch at 38 to 149 (FLNNLIDNVR…EHVEKVAEKV (112 aa)) forms a coiled coil.

The protein belongs to the Tim44 family. Probable component of the PAM complex at least composed of a mitochondrial HSP70 protein, GrpE, tin-44, tim-16 and tim-14/dnj-21. The complex interacts with the tim-23 component of the TIM23 complex.

The protein localises to the mitochondrion inner membrane. In terms of biological role, essential component of the PAM complex, a complex required for the translocation of transit peptide-containing proteins from the inner membrane into the mitochondrial matrix in an ATP-dependent manner. Recruits mitochondrial HSP70 to drive protein translocation into the matrix using ATP as an energy source. The polypeptide is Probable mitochondrial import inner membrane translocase subunit tin-44 (Caenorhabditis elegans).